The chain runs to 645 residues: Macrolide export ATP-binding/permease protein MacB (645 aa).

Residues isoleucine 6–lysine 244 enclose the ABC transporter domain. Glycine 42–serine 49 contributes to the ATP binding site. Helical transmembrane passes span alanine 271 to glycine 291, phenylalanine 520 to methionine 540, valine 577 to isoleucine 597, and proline 608 to leucine 628.

The protein belongs to the ABC transporter superfamily. Macrolide exporter (TC 3.A.1.122) family. In terms of assembly, homodimer.

It is found in the cell inner membrane. Its function is as follows. Non-canonical ABC transporter that contains transmembrane domains (TMD), which form a pore in the inner membrane, and an ATP-binding domain (NBD), which is responsible for energy generation. Confers resistance against macrolides. The sequence is that of Macrolide export ATP-binding/permease protein MacB from Hyphomonas neptunium (strain ATCC 15444).